The following is a 152-amino-acid chain: Methylglyoxal synthase (152 aa).

The 148-residue stretch at 5–152 folds into the MGS-like domain; that stretch reads TRTVQAQKHI…YQLYLQQRLK (148 aa). Substrate-binding positions include histidine 19, lysine 23, 45 to 48, and 65 to 66; these read TGTT and SG. Catalysis depends on aspartate 71, which acts as the Proton donor/acceptor. A substrate-binding site is contributed by histidine 98.

The protein belongs to the methylglyoxal synthase family.

The enzyme catalyses dihydroxyacetone phosphate = methylglyoxal + phosphate. Catalyzes the formation of methylglyoxal from dihydroxyacetone phosphate. The chain is Methylglyoxal synthase from Erwinia tasmaniensis (strain DSM 17950 / CFBP 7177 / CIP 109463 / NCPPB 4357 / Et1/99).